A 631-amino-acid polypeptide reads, in one-letter code: Arginine--tRNA ligase (631 aa).

The 'HIGH' region motif lies at 132-142; sequence PNIAKPLHVGH.

It belongs to the class-I aminoacyl-tRNA synthetase family.

Its subcellular location is the cytoplasm. It carries out the reaction tRNA(Arg) + L-arginine + ATP = L-arginyl-tRNA(Arg) + AMP + diphosphate. In Halobacterium salinarum (strain ATCC 700922 / JCM 11081 / NRC-1) (Halobacterium halobium), this protein is Arginine--tRNA ligase.